We begin with the raw amino-acid sequence, 593 residues long: ATPase family AAA domain-containing protein 3-A (593 aa).

Positions 1 to 64 (MSWLFGLNKG…AKAARELDQS (64 aa)) are disordered. Over 1 to 242 (MSWLFGLNKG…FRTFISDWDK (242 aa)) the chain is Mitochondrial intermembrane. A compositionally biased stretch (pro residues) spans 15-27 (PGVPGFPEPPSPP). 2 stretches are compositionally biased toward basic and acidic residues: residues 33–44 (GGDKNKPKDKWS) and 53–64 (RAAKAARELDQS). Residues 52 to 215 (ERAAKAAREL…QIRLKAAEHR (164 aa)) are a coiled coil. The helical transmembrane segment at 243–260 (VTATVAGLTLLAVGVYTA) threads the bilayer. Topologically, residues 261 to 593 (KNATGVAGRY…LQPLLEGTQV (333 aa)) are mitochondrial matrix. 348–355 (GPPGTGKT) lines the ATP pocket.

The protein belongs to the AAA ATPase family. In terms of assembly, can form homooligomers. Homodimer formation at the N-terminus may be regulated by ATP and is required for the interaction with the inner surface of the mitochondrial outer membrane and correct mitochondrial homeostasis.

It localises to the mitochondrion inner membrane. The protein localises to the mitochondrion matrix. The protein resides in the mitochondrion nucleoid. The catalysed reaction is ATP + H2O = ADP + phosphate + H(+). Functionally, essential for mitochondrial network organization, mitochondrial metabolism and cell growth at organism and cellular level. May play an important role in mitochondrial protein synthesis. May also participate in mitochondrial DNA replication. May bind to mitochondrial DNA D-loops and contribute to nucleoid stability. Required for enhanced channeling of cholesterol for hormone-dependent steroidogenesis. Involved in mitochondrial-mediated antiviral innate immunity. Required to protect mitochondria from the PERK-mediated unfolded protein response: specifically inhibits the activity of EIF2AK3/PERK at mitochondria-endoplasmic reticulum contact sites, thereby providing a safe haven for mitochondrial protein translation during endoplasmic reticulum stress. Ability to inhibit EIF2AK3/PERK is independent of its ATPase activity. Also involved in the mitochondrial DNA damage response by promoting signaling between damaged genomes and the mitochondrial membrane, leading to activation of the integrated stress response (ISR). The polypeptide is ATPase family AAA domain-containing protein 3-A (atad3-a) (Xenopus laevis (African clawed frog)).